The primary structure comprises 385 residues: Putative glutamate--cysteine ligase 2 (385 aa).

This sequence belongs to the glutamate--cysteine ligase type 2 family. YbdK subfamily.

It catalyses the reaction L-cysteine + L-glutamate + ATP = gamma-L-glutamyl-L-cysteine + ADP + phosphate + H(+). ATP-dependent carboxylate-amine ligase which exhibits weak glutamate--cysteine ligase activity. The sequence is that of Putative glutamate--cysteine ligase 2 from Solibacter usitatus (strain Ellin6076).